A 141-amino-acid polypeptide reads, in one-letter code: Large ribosomal subunit protein uL11A (141 aa).

This sequence belongs to the universal ribosomal protein uL11 family. As to quaternary structure, part of the ribosomal stalk of the 50S ribosomal subunit. Interacts with L10 and the large rRNA to form the base of the stalk. L10 forms an elongated spine to which L12 dimers bind in a sequential fashion forming a multimeric L10(L12)X complex. One or more lysine residues are methylated.

Its function is as follows. Forms part of the ribosomal stalk which helps the ribosome interact with GTP-bound translation factors. The chain is Large ribosomal subunit protein uL11A from Halalkalibacterium halodurans (strain ATCC BAA-125 / DSM 18197 / FERM 7344 / JCM 9153 / C-125) (Bacillus halodurans).